The sequence spans 622 residues: Phosphoribomutase (622 aa).

Residues Thr57, Arg61, 158–159, and Lys168 contribute to the substrate site; that span reads SH. Ser158 (phosphoserine intermediate) is an active-site residue. Ser158 serves as a coordination point for Mg(2+). Phosphoserine is present on Ser158. Residues Asp325, Asp327, and Asp329 each coordinate Mg(2+). Residues 329–330, Thr404, 428–430, and Lys442 contribute to the substrate site; these read DR and EEA.

This sequence belongs to the phosphohexose mutase family. It depends on Mg(2+) as a cofactor.

The protein resides in the cytoplasm. It localises to the nucleus. The catalysed reaction is alpha-D-ribose 1-phosphate = D-ribose 5-phosphate. In terms of biological role, major phosphoribomutase that converts ribose 1-phosphate to ribose 5-phosphate. Involved in ribose salvage via the pentose phosphate pathway. In Saccharomyces cerevisiae (strain ATCC 204508 / S288c) (Baker's yeast), this protein is Phosphoribomutase.